We begin with the raw amino-acid sequence, 226 residues long: NADH-ubiquinone oxidoreductase chain 6 (226 aa).

5 helical membrane-spanning segments follow: residues 2–22, 28–48, 56–76, 90–110, and 169–189; these read STLG…FVIL, IYSI…LLTV, IYIL…VMMI, YNIY…ILIT, and IWFI…IYIT.

Belongs to the complex I subunit 6 family.

The protein resides in the mitochondrion membrane. The enzyme catalyses a ubiquinone + NADH + 5 H(+)(in) = a ubiquinol + NAD(+) + 4 H(+)(out). Functionally, core subunit of the mitochondrial membrane respiratory chain NADH dehydrogenase (Complex I) that is believed to belong to the minimal assembly required for catalysis. Complex I functions in the transfer of electrons from NADH to the respiratory chain. The immediate electron acceptor for the enzyme is believed to be ubiquinone. This is NADH-ubiquinone oxidoreductase chain 6 (nad6) from Dictyostelium citrinum (Slime mold).